An 875-amino-acid chain; its full sequence is MAAAPSHPAGLPGSPGPGSPPPPGGLDLQSPPPLLPQIPAPGSGVSFHIQIGLTREFVLLPAASELAHVKQLACSIVDQKFPECGFYGLYDKILLFKHDPTSANLLQLVRSAADIQEGDLVEVVLSASATFEDFQIRPHALTVHSYRAPAFCDHCGEMLFGLVRQGLKCDGCGLNYHKRCAFSIPNNCSGARKRRLSSTSLASGHSVRLGSSESLPCTAEELSRSTTDLLPRRPPSSSSSSSSSSFYTGRPIELDKMLMSKVKVPHTFLIHSYTRPTVCQACKKLLKGLFRQGLQCKDCKFNCHKRCATRVPNDCLGEALINGDVPMEEAADYSEADKSSISDELEDSGVIPGSHSESALHASEEEEGEGHKAQSSLGYIPLMRVVQSVRHTTRKSSTTLREGWVVHYSNKDTLRKRHYWRLDCKCITLFQNNTTNRYYKEIPLSEILAVEPAQNFSLVPPGTNPHCFEIITANVTYFVGETPGGAPGGPSGQGTEAVRGWETAIRQALMPVILQDAPSAPGHTPHRQASLSISVSNSQIQENVDIATVYQIFPDEVLGSGQFGVVYGGKHRKTGRDVAVKVIDKLRFPTKQESQLRNEVAILQSLRHPGIVNLECMFETPEKVFVVMEKLHGDMLEMILSSEKGRLPERLTKFLITQILVALRHLHFKNIVHCDLKPENVLLASADPFPQVKLCDFGFARIIGEKSFRRSVVGTPAYLAPEVLLNQGYNRSLDMWSVGVIMYVSLSGTFPFNEDEDINDQIQNAAFMYPASPWSHISSGAIDLINNLLQVKMRKRYSVDKSLSHPWLQEYQTWLDLRELEGKMGERYITHESDDARWDQFVAERHGTPAEGDLGGACLPQDHEMQGLAERISIL.

Low complexity predominate over residues 1 to 12 (MAAAPSHPAGLP). The segment at 1–35 (MAAAPSHPAGLPGSPGPGSPPPPGGLDLQSPPPLL) is disordered. Positions 14–35 (SPGPGSPPPPGGLDLQSPPPLL) are enriched in pro residues. Residue serine 30 is modified to Phosphoserine. Tyrosine 87 carries the phosphotyrosine modification. The segment at 138 to 188 (PHALTVHSYRAPAFCDHCGEMLFGLVRQGLKCDGCGLNYHKRCAFSIPNNC) adopts a Phorbol-ester/DAG-type 1 zinc-finger fold. Phosphoserine is present on residues serine 197, serine 198, serine 200, serine 203, serine 206, serine 211, serine 212, and serine 214. The disordered stretch occupies residues 224–247 (RSTTDLLPRRPPSSSSSSSSSSFY). A compositionally biased stretch (low complexity) spans 236 to 245 (SSSSSSSSSS). Residue serine 244 is modified to Phosphoserine; by CSNK1D and CSNK1E. The residue at position 245 (serine 245) is a Phosphoserine. The Phorbol-ester/DAG-type 2 zinc finger occupies 265–315 (PHTFLIHSYTRPTVCQACKKLLKGLFRQGLQCKDCKFNCHKRCATRVPNDC). A disordered region spans residues 332 to 374 (DYSEADKSSISDELEDSGVIPGSHSESALHASEEEEGEGHKAQ). A PH domain is found at 398–510 (TTLREGWVVH…WETAIRQALM (113 aa)). Tyrosine 408 bears the Phosphotyrosine mark. Residue tyrosine 439 is modified to Phosphotyrosine; by ABL1. Serine 519 is subject to Phosphoserine. In terms of domain architecture, Protein kinase spans 552 to 808 (IFPDEVLGSG…VDKSLSHPWL (257 aa)). ATP is bound by residues 558-566 (LGSGQFGVV) and lysine 581. The active-site Proton acceptor is the aspartate 675. The residue at position 707 (serine 707) is a Phosphoserine; by PKC. The residue at position 711 (serine 711) is a Phosphoserine; by autocatalysis. At tyrosine 718 the chain carries Phosphotyrosine; by ABL1. The short motif at 725-727 (LNQ) is the Important for ABL1-mediated Tyr-718 phosphorylation element. Phosphoserine; by autocatalysis is present on serine 873.

The protein belongs to the protein kinase superfamily. CAMK Ser/Thr protein kinase family. PKD subfamily. As to quaternary structure, interacts (via C-terminus) with LCK. Interacts (via N-terminus and zing-finger domain 1 and 2) with PRKCD in response to oxidative stress; the interaction is independent of PRKD2 tyrosine phosphorylation. Mg(2+) serves as cofactor. Phosphorylation of Ser-873 correlates with the activation status of the kinase. Ser-707 is probably phosphorylated by PKC. Phosphorylation at Ser-244 by CSNK1D and CSNK1E promotes nuclear localization and substrate targeting. Phosphorylation at Ser-244, Ser-707 and Ser-711 is required for nuclear localization. Phosphorylated at Tyr-438 by ABL1 in response to oxidative stress. Phosphorylated at Tyr-718 by ABL1 specifically in response to oxidative stress; requires prior phosphorylation at Ser-707 or/and Ser-711.

It is found in the cytoplasm. Its subcellular location is the cell membrane. The protein localises to the golgi apparatus. The protein resides in the trans-Golgi network. The enzyme catalyses L-seryl-[protein] + ATP = O-phospho-L-seryl-[protein] + ADP + H(+). It catalyses the reaction L-threonyl-[protein] + ATP = O-phospho-L-threonyl-[protein] + ADP + H(+). Activated by DAG and phorbol esters. Phorbol-ester/DAG-type domains bind DAG, mediating translocation to membranes. Autophosphorylation of Ser-711 and phosphorylation of Ser-707 by PKC relieves auto-inhibition by the PH domain. Catalytic activity is further increased by phosphorylation at Tyr-718 in response to oxidative stress. In terms of biological role, serine/threonine-protein kinase that converts transient diacylglycerol (DAG) signals into prolonged physiological effects downstream of PKC, and is involved in the regulation of cell proliferation via MAPK1/3 (ERK1/2) signaling, oxidative stress-induced NF-kappa-B activation, inhibition of HDAC7 transcriptional repression, signaling downstream of T-cell antigen receptor (TCR) and cytokine production, and plays a role in Golgi membrane trafficking, angiogenesis, secretory granule release and cell adhesion. May potentiate mitogenesis induced by the neuropeptide bombesin by mediating an increase in the duration of MAPK1/3 (ERK1/2) signaling, which leads to accumulation of immediate-early gene products including FOS that stimulate cell cycle progression. In response to oxidative stress, is phosphorylated at Tyr-438 and Tyr-718 by ABL1, which leads to the activation of PRKD2 without increasing its catalytic activity, and mediates activation of NF-kappa-B. In response to the activation of the gastrin receptor CCKBR, is phosphorylated at Ser-244 by CSNK1D and CSNK1E, translocates to the nucleus, phosphorylates HDAC7, leading to nuclear export of HDAC7 and inhibition of HDAC7 transcriptional repression of NR4A1/NUR77. Upon TCR stimulation, is activated independently of ZAP70, translocates from the cytoplasm to the nucleus and is required for interleukin-2 (IL2) promoter up-regulation. During adaptive immune responses, is required in peripheral T-lymphocytes for the production of the effector cytokines IL2 and IFNG after TCR engagement and for optimal induction of antibody responses to antigens. In epithelial cells stimulated with lysophosphatidic acid (LPA), is activated through a PKC-dependent pathway and mediates LPA-stimulated interleukin-8 (IL8) secretion via a NF-kappa-B-dependent pathway. During TCR-induced T-cell activation, interacts with and is activated by the tyrosine kinase LCK, which results in the activation of the NFAT transcription factors. In the trans-Golgi network (TGN), regulates the fission of transport vesicles that are on their way to the plasma membrane and in polarized cells is involved in the transport of proteins from the TGN to the basolateral membrane. Plays an important role in endothelial cell proliferation and migration prior to angiogenesis, partly through modulation of the expression of KDR/VEGFR2 and FGFR1, two key growth factor receptors involved in angiogenesis. In secretory pathway, is required for the release of chromogranin-A (CHGA)-containing secretory granules from the TGN. Downstream of PRKCA, plays important roles in angiotensin-2-induced monocyte adhesion to endothelial cells. This chain is Serine/threonine-protein kinase D2 (Prkd2), found in Mus musculus (Mouse).